The sequence spans 245 residues: 1-(5-phosphoribosyl)-5-[(5-phosphoribosylamino)methylideneamino] imidazole-4-carboxamide isomerase (245 aa).

D10 (proton acceptor) is an active-site residue. The active-site Proton donor is D129.

The protein belongs to the HisA/HisF family.

It localises to the cytoplasm. It carries out the reaction 1-(5-phospho-beta-D-ribosyl)-5-[(5-phospho-beta-D-ribosylamino)methylideneamino]imidazole-4-carboxamide = 5-[(5-phospho-1-deoxy-D-ribulos-1-ylimino)methylamino]-1-(5-phospho-beta-D-ribosyl)imidazole-4-carboxamide. Its pathway is amino-acid biosynthesis; L-histidine biosynthesis; L-histidine from 5-phospho-alpha-D-ribose 1-diphosphate: step 4/9. This chain is 1-(5-phosphoribosyl)-5-[(5-phosphoribosylamino)methylideneamino] imidazole-4-carboxamide isomerase, found in Parafrankia sp. (strain EAN1pec).